We begin with the raw amino-acid sequence, 431 residues long: Glutamate-1-semialdehyde 2,1-aminomutase (431 aa).

At K269 the chain carries N6-(pyridoxal phosphate)lysine.

This sequence belongs to the class-III pyridoxal-phosphate-dependent aminotransferase family. HemL subfamily. Homodimer. Requires pyridoxal 5'-phosphate as cofactor.

The protein localises to the cytoplasm. It carries out the reaction (S)-4-amino-5-oxopentanoate = 5-aminolevulinate. It participates in porphyrin-containing compound metabolism; protoporphyrin-IX biosynthesis; 5-aminolevulinate from L-glutamyl-tRNA(Glu): step 2/2. It functions in the pathway porphyrin-containing compound metabolism; chlorophyll biosynthesis. In Chlorobium phaeobacteroides (strain DSM 266 / SMG 266 / 2430), this protein is Glutamate-1-semialdehyde 2,1-aminomutase.